The chain runs to 103 residues: Small ribosomal subunit protein uS10 (103 aa).

This sequence belongs to the universal ribosomal protein uS10 family. Part of the 30S ribosomal subunit.

Functionally, involved in the binding of tRNA to the ribosomes. This is Small ribosomal subunit protein uS10 from Chlorobium phaeobacteroides (strain DSM 266 / SMG 266 / 2430).